We begin with the raw amino-acid sequence, 320 residues long: Aspartate carbamoyltransferase catalytic subunit (320 aa).

Arginine 68 and threonine 69 together coordinate carbamoyl phosphate. Position 96 (lysine 96) interacts with L-aspartate. The carbamoyl phosphate site is built by arginine 118, histidine 148, and glutamine 151. Residues arginine 181 and arginine 236 each contribute to the L-aspartate site. Carbamoyl phosphate contacts are provided by glycine 277 and proline 278.

This sequence belongs to the aspartate/ornithine carbamoyltransferase superfamily. ATCase family. In terms of assembly, heterododecamer (2C3:3R2) of six catalytic PyrB chains organized as two trimers (C3), and six regulatory PyrI chains organized as three dimers (R2).

The enzyme catalyses carbamoyl phosphate + L-aspartate = N-carbamoyl-L-aspartate + phosphate + H(+). Its pathway is pyrimidine metabolism; UMP biosynthesis via de novo pathway; (S)-dihydroorotate from bicarbonate: step 2/3. Catalyzes the condensation of carbamoyl phosphate and aspartate to form carbamoyl aspartate and inorganic phosphate, the committed step in the de novo pyrimidine nucleotide biosynthesis pathway. The chain is Aspartate carbamoyltransferase catalytic subunit from Acidovorax ebreus (strain TPSY) (Diaphorobacter sp. (strain TPSY)).